Reading from the N-terminus, the 312-residue chain is Telomere-binding protein OPG077 (312 aa).

It belongs to the orthopoxvirus OPG077 family.

It is found in the virion. In terms of biological role, DNA-binding protein which binds to the hairpin form of the viral telomeric sequence. Required for the production of mature virions (MV). The protein is Telomere-binding protein OPG077 (OPG077) of Rabbitpox virus (strain Utrecht) (RPV).